Reading from the N-terminus, the 154-residue chain is Anaerobic ribonucleoside-triphosphate reductase-activating protein (154 aa).

Residues C26, C30, and C33 each coordinate [4Fe-4S] cluster. Residues 32–34 (GCY) and G74 contribute to the S-adenosyl-L-methionine site.

The protein belongs to the organic radical-activating enzymes family. Forms a tetramer composed of two NrdD and two NrdG subunits. The cofactor is [4Fe-4S] cluster.

It localises to the cytoplasm. It catalyses the reaction glycyl-[protein] + reduced [flavodoxin] + S-adenosyl-L-methionine = glycin-2-yl radical-[protein] + semiquinone [flavodoxin] + 5'-deoxyadenosine + L-methionine + H(+). In terms of biological role, activation of anaerobic ribonucleoside-triphosphate reductase under anaerobic conditions by generation of an organic free radical, using S-adenosylmethionine and reduced flavodoxin as cosubstrates to produce 5'-deoxy-adenosine. The polypeptide is Anaerobic ribonucleoside-triphosphate reductase-activating protein (nrdG) (Escherichia coli O157:H7).